Reading from the N-terminus, the 204-residue chain is Ribosome maturation factor RimP (204 aa).

Positions 176-204 (GNFDESQFDEIEESEGEEADEAEQPPTKH) are disordered. Positions 181-198 (SQFDEIEESEGEEADEAE) are enriched in acidic residues.

Belongs to the RimP family.

The protein resides in the cytoplasm. In terms of biological role, required for maturation of 30S ribosomal subunits. This chain is Ribosome maturation factor RimP, found in Cereibacter sphaeroides (strain ATCC 17029 / ATH 2.4.9) (Rhodobacter sphaeroides).